A 54-amino-acid polypeptide reads, in one-letter code: Ovomucoid (54 aa).

Positions 4–54 (VDCSEYPKPVCSPEYMPLCGSDSKTYNNKCDFCSAVVESNGTLTLGHFGKC) constitute a Kazal-like domain. 3 cysteine pairs are disulfide-bonded: Cys6/Cys36, Cys14/Cys33, and Cys22/Cys54. Asn43 is a glycosylation site (N-linked (GlcNAc...) asparagine).

The protein resides in the secreted. In Casuarius casuarius (Southern cassowary), this protein is Ovomucoid.